A 79-amino-acid polypeptide reads, in one-letter code: Cell division topological specificity factor (79 aa).

This sequence belongs to the MinE family.

Functionally, prevents the cell division inhibition by proteins MinC and MinD at internal division sites while permitting inhibition at polar sites. This ensures cell division at the proper site by restricting the formation of a division septum at the midpoint of the long axis of the cell. The chain is Cell division topological specificity factor from Nitratiruptor sp. (strain SB155-2).